We begin with the raw amino-acid sequence, 210 residues long: Tetraspanin-31 (210 aa).

Topologically, residues 1–12 (MVCGGFACSKNA) are cytoplasmic. A helical transmembrane segment spans residues 13-33 (LCALNVVYMLVSLLLIGVAAW). The Extracellular portion of the chain corresponds to 34–44 (GKGLGLVSSIH). A helical membrane pass occupies residues 45–65 (IIGGVIAVGVFLLLIAVAGLV). Residues 66 to 72 (GAVNHHQ) lie on the Cytoplasmic side of the membrane. A helical membrane pass occupies residues 73-93 (VLLFFYMIILGLVFIFQFVIS). The Extracellular portion of the chain corresponds to 94-173 (CSCLAINRSK…FLKHSDEALK (80 aa)). N100, N109, N117, and N134 each carry an N-linked (GlcNAc...) asparagine glycan. The helical transmembrane segment at 174-194 (ILGGVGLFFSFTEILGVWLAM) threads the bilayer. Topologically, residues 195–210 (RFRNQKDPRANPSAFL) are cytoplasmic.

Belongs to the tetraspanin (TM4SF) family.

It is found in the membrane. This chain is Tetraspanin-31 (TSPAN31), found in Homo sapiens (Human).